Here is a 388-residue protein sequence, read N- to C-terminus: Succinate--CoA ligase [ADP-forming] subunit beta (388 aa).

The ATP-grasp domain maps to 9–244 (KEILRKYGVT…LDEEDPAEIE (236 aa)). Residues Lys46, 53-55 (GRG), Glu99, Ala102, and Glu107 contribute to the ATP site. The Mg(2+) site is built by Asn199 and Asp213. Substrate-binding positions include Asn264 and 321 to 323 (GIM).

The protein belongs to the succinate/malate CoA ligase beta subunit family. As to quaternary structure, heterotetramer of two alpha and two beta subunits. Mg(2+) serves as cofactor.

It carries out the reaction succinate + ATP + CoA = succinyl-CoA + ADP + phosphate. It catalyses the reaction GTP + succinate + CoA = succinyl-CoA + GDP + phosphate. It functions in the pathway carbohydrate metabolism; tricarboxylic acid cycle; succinate from succinyl-CoA (ligase route): step 1/1. In terms of biological role, succinyl-CoA synthetase functions in the citric acid cycle (TCA), coupling the hydrolysis of succinyl-CoA to the synthesis of either ATP or GTP and thus represents the only step of substrate-level phosphorylation in the TCA. The beta subunit provides nucleotide specificity of the enzyme and binds the substrate succinate, while the binding sites for coenzyme A and phosphate are found in the alpha subunit. The polypeptide is Succinate--CoA ligase [ADP-forming] subunit beta (Herminiimonas arsenicoxydans).